The following is a 212-amino-acid chain: Adenylate kinase (212 aa).

10 to 15 (GAGKGT) is a binding site for ATP. Residues 30 to 59 (STGDMFRAAMANQTEMGTLAKSFIDKGELV) are NMP. AMP contacts are provided by residues Thr31, Arg36, 57 to 59 (ELV), 86 to 89 (GYPR), and Gln93. Residues 127–159 (GRIINRKTGETYHKVFNPPADYNEDDYYQREDD) are LID. ATP-binding positions include Arg128 and 137-138 (TY). Residues Arg156 and Arg167 each coordinate AMP. An ATP-binding site is contributed by Gln195.

The protein belongs to the adenylate kinase family. Monomer.

It is found in the cytoplasm. The catalysed reaction is AMP + ATP = 2 ADP. It functions in the pathway purine metabolism; AMP biosynthesis via salvage pathway; AMP from ADP: step 1/1. Catalyzes the reversible transfer of the terminal phosphate group between ATP and AMP. Plays an important role in cellular energy homeostasis and in adenine nucleotide metabolism. The protein is Adenylate kinase of Streptococcus mutans serotype c (strain ATCC 700610 / UA159).